Here is a 543-residue protein sequence, read N- to C-terminus: CTP synthase (543 aa).

The amidoligase domain stretch occupies residues 1 to 265 (MARYIFITGG…DDEVLAAFGI (265 aa)). Residue serine 13 participates in CTP binding. Serine 13 contacts UTP. 14–19 (SLGKGL) contacts ATP. Residue tyrosine 54 participates in L-glutamine binding. Position 71 (aspartate 71) interacts with ATP. Mg(2+) is bound by residues aspartate 71 and glutamate 139. Residues 146–148 (DIE), 186–191 (KTKPTQ), and lysine 222 contribute to the CTP site. UTP-binding positions include 186–191 (KTKPTQ) and lysine 222. 238 to 240 (RDV) provides a ligand contact to ATP. In terms of domain architecture, Glutamine amidotransferase type-1 spans 291-542 (TIAIVGKYTG…VQAAVVQSRL (252 aa)). Residue glycine 353 participates in L-glutamine binding. Cysteine 380 acts as the Nucleophile; for glutamine hydrolysis in catalysis. L-glutamine contacts are provided by residues 381–384 (FGMQ), glutamate 404, and arginine 470. Catalysis depends on residues histidine 515 and glutamate 517.

It belongs to the CTP synthase family. Homotetramer.

It carries out the reaction UTP + L-glutamine + ATP + H2O = CTP + L-glutamate + ADP + phosphate + 2 H(+). The enzyme catalyses L-glutamine + H2O = L-glutamate + NH4(+). It catalyses the reaction UTP + NH4(+) + ATP = CTP + ADP + phosphate + 2 H(+). Its pathway is pyrimidine metabolism; CTP biosynthesis via de novo pathway; CTP from UDP: step 2/2. Allosterically activated by GTP, when glutamine is the substrate; GTP has no effect on the reaction when ammonia is the substrate. The allosteric effector GTP functions by stabilizing the protein conformation that binds the tetrahedral intermediate(s) formed during glutamine hydrolysis. Inhibited by the product CTP, via allosteric rather than competitive inhibition. Functionally, catalyzes the ATP-dependent amination of UTP to CTP with either L-glutamine or ammonia as the source of nitrogen. Regulates intracellular CTP levels through interactions with the four ribonucleotide triphosphates. The sequence is that of CTP synthase from Rhodopseudomonas palustris (strain BisB18).